The sequence spans 552 residues: Cation/acetate symporter ActP (552 aa).

Helical transmembrane passes span 6-26, 35-55, 78-98, 103-123, 151-171, 185-205, 208-228, 264-284, 305-325, 357-377, 407-427, 431-451, 467-487, and 496-516; these read LLAV…AIAG, MEAI…TYWA, GLAM…SALV, FDGL…LFLI, LSAC…MVGA, VAVV…GMLA, WVQI…AIMV, ISAL…PHIL, GLMG…ILLV, LFLG…VAGL, VSKI…ILFE, IAFM…PIIL, GGWL…TIWV, and IFPY…GTWL.

The protein belongs to the sodium:solute symporter (SSF) (TC 2.A.21) family.

It is found in the cell inner membrane. Transports acetate. This chain is Cation/acetate symporter ActP, found in Erwinia tasmaniensis (strain DSM 17950 / CFBP 7177 / CIP 109463 / NCPPB 4357 / Et1/99).